The primary structure comprises 503 residues: MRLLYSLFHCSAFLVGFTLSVGVLPIPNEHAASIKAKFDDYAEHYLLPEDFHNAETAPVKKPTDAEIESMQNSLLFEGDIMGVPEIEKSDILKRLRDDPLLDEDEIFRKPFHSALNLVTYPDKLWPEGQVPYMLEEGMTNDQRTAIAQAFDEYKTKTCVRFVPKTDDDFDYIYVKRNVAFGCSSYVGRAGGNQTVSLEVDKCFSKGIIAHELMHALGFFHEHSRTDRDDFVDINEDNIRPGMMRNFEKYPRKIIDSLGMPYDYESVMHYHKLAFSRNGKPTIIPKDNEADVGQRYKLSEMDSKKVNKLYQCGEYSKTSSTTTTTTTTTTTTTTEEPTTTTEVEEKPKDKKVSSTTTTTKKPTTTTTTTPKPVERSRNKKCEDLNAHCGMWEQLGHCQHSVKYMAHYCRKACNLCEVEVTTTTTTTPKPVPRNKEKENKSASSTTRGTSTATSTTPKTTTTTTSAPKEKCEDKNLFCSYWAKIGECNSESKFMKIFCKASCGKC.

The first 25 residues, 1-25, serve as a signal peptide directing secretion; the sequence is MRLLYSLFHCSAFLVGFTLSVGVLP. The 197-residue stretch at 116 to 312 folds into the Peptidase M12A domain; sequence NLVTYPDKLW…KKVNKLYQCG (197 aa). Disulfide bonds link cysteine 158/cysteine 311 and cysteine 182/cysteine 202. The N-linked (GlcNAc...) asparagine glycan is linked to asparagine 192. Residue histidine 210 participates in Zn(2+) binding. Glutamate 211 is a catalytic residue. Zn(2+)-binding residues include histidine 214 and histidine 220. Over residues 317 to 340 the composition is skewed to low complexity; that stretch reads TSSTTTTTTTTTTTTTTEEPTTTT. Positions 317–377 are disordered; sequence TSSTTTTTTT…TPKPVERSRN (61 aa). Positions 342–351 are enriched in basic and acidic residues; that stretch reads VEEKPKDKKV. The segment covering 352-370 has biased composition (low complexity); sequence SSTTTTTKKPTTTTTTTPK. 3 cysteine pairs are disulfide-bonded: cysteine 380/cysteine 414, cysteine 387/cysteine 407, and cysteine 396/cysteine 411. Residues 380–414 form the ShKT 1 domain; it reads CEDLNAHCGMWEQLGHCQHSVKYMAHYCRKACNLC. Residues 422 to 464 are disordered; sequence TTTTPKPVPRNKEKENKSASSTTRGTSTATSTTPKTTTTTTSA. Asparagine 437 is a glycosylation site (N-linked (GlcNAc...) asparagine). The span at 439–464 shows a compositional bias: low complexity; it reads SASSTTRGTSTATSTTPKTTTTTTSA. Intrachain disulfides connect cysteine 469–cysteine 503, cysteine 476–cysteine 496, and cysteine 485–cysteine 500. The region spanning 469-503 is the ShKT 2 domain; the sequence is CEDKNLFCSYWAKIGECNSESKFMKIFCKASCGKC.

Requires Zn(2+) as cofactor. As to expression, expressed in pharyngeal muscles and mc cells.

It is found in the secreted. In terms of biological role, metalloprotease. The sequence is that of Zinc metalloproteinase nas-14 (nas-14) from Caenorhabditis elegans.